A 547-amino-acid polypeptide reads, in one-letter code: MSFERTGSIFSGLAGAYVQREAHVVSLFPYAFPDENALALRARRMTATDSYPRSELSSLLEGYQRRLADLAGLEGSSNRAADQARRLAEANSLAVVTGQQAGLFTGPLYTIYKAVTCINLAKRLEAKTGQPVIPVFWVASEDHDFEEISHIKLLQGEKTVVITMTSRPDEDRFAIGHRTLPEDLAVTLESFLSHLPQSEHRLPWEETWHRLLTGPTGPHEHFAALLHKLLGPYGLVILDPLLSGLKQLPRCASFFASVLENEVSLREGLSRGVEQIRRLGYTPQVEKGPEETSLFYFHQGRRLAILRDGRGYRLRGAEITFSRDELLDLAQRQPDLFSTNVVTRPLLQDQLLPTTAYVAGPGEIAYFAAYRDVYRAMGMEMPPIVPRLSVTIIEGFVDKLLERYALSFADVPAGLEGRLREELAAQDELGIGALFEELESQVRAAYLPAVERIARWDRQMGNLAEENLDRVIAQARFLRQKVEHRHRQRCQDKRNHFRKVELHLWPGAPQERVYNIFPYLLKYGSSLIETLLEAPVEWLDSHCLFRC.

A coiled-coil region spans residues 462-484 (NLAEENLDRVIAQARFLRQKVEH).

It belongs to the BshC family.

Functionally, involved in bacillithiol (BSH) biosynthesis. May catalyze the last step of the pathway, the addition of cysteine to glucosamine malate (GlcN-Mal) to generate BSH. The chain is Putative cysteine ligase BshC from Heliobacterium modesticaldum (strain ATCC 51547 / Ice1).